Here is a 266-residue protein sequence, read N- to C-terminus: Undecaprenyl-diphosphatase (266 aa).

7 consecutive transmembrane segments (helical) span residues 41 to 61, 80 to 100, 107 to 127, 140 to 160, 180 to 200, 213 to 233, and 245 to 265; these read NLAF…VVLW, TKYV…GVFF, IFGS…ALLA, ISMK…MPGL, LAQF…LLDV, IPAL…CVAC, and LIYF…CTLL.

Belongs to the UppP family.

It is found in the cell inner membrane. The catalysed reaction is di-trans,octa-cis-undecaprenyl diphosphate + H2O = di-trans,octa-cis-undecaprenyl phosphate + phosphate + H(+). In terms of biological role, catalyzes the dephosphorylation of undecaprenyl diphosphate (UPP). Confers resistance to bacitracin. This Parabacteroides distasonis (strain ATCC 8503 / DSM 20701 / CIP 104284 / JCM 5825 / NCTC 11152) protein is Undecaprenyl-diphosphatase.